A 1576-amino-acid chain; its full sequence is MAAATVVLPVEWIKNWEKSGRGEFLHLCRILSENKNHDSSTYRDFQQALYELSYHVIKGNLKHEQASNVLNDISEFREDMPSILADVFCILDIETNCLEEKSKRDYFTQLVLACLYLVSDTVLKERLDPETLESLGLIKQSQQFNQKSVKIKTKLFYKQQKFNLLREENEGYAKLIAELGQDLSGNITSDLILENIKSLIGCFNLDPNRVLDVILEVFECRPEHDDFFISLLESYMSMCEPQTLCHILGFKFKFYQEPNGETPSSLYRVAAVLLQFNLIDLDDLYVHLLPADNCIMDEHKREIVEAKQIVRKLTMVVLSSEKIDEREKEKEKEEEKVEKPPDNQKLGLLEALLKIGDWQHAQNIMDQMPPYYAASHKLIALAICKLIHITIEPLYRRVGVPKGAKGSPVNALQNKRAPKQAESFEDLRRDVFNMFCYLGPHLSHDPILFAKVVRIGKSFMKEFQSDGSKQEDKEKTEVILSCLLSITDQVLLPSLSLMDCNACMSEELWGMFKTFPYQHRYRLYGQWKNETYNSHPLLVKVKAQTIDRAKYIMKRLTKENVKPSGRQIGKLSHSNPTILFDYILSQIQKYDNLITPVVDSLKYLTSLNYDVLAYCIIEALANPEKERMKHDDTTISSWLQSLASFCGAVFRKYPIDLAGLLQYVANQLKAGKSFDLLILKEVVQKMAGIEITEEMTMEQLEAMTGGEQLKAEGGYFGQIRNTKKSSQRLKDALLDHDLALPLCLLMAQQRNGVIFQEGGEKHLKLVGKLYDQCHDTLVQFGGFLASNLSTEDYIKRVPSIDVLCNEFHTPHDAAFFLSRPMYAHHISSKYDELKKSEKGSKQQHKVHKYITSCEMVMAPVHEAVVSLHVSKVWDDISPQFYATFWSLTMYDLAVPHTSYEREVNKLKVQMKAIDDNQEMPPNKKKKEKERCTALQDKLLEEEKKQMEHVQRVLQRLKLEKDNWLLAKSTKNETITKFLQLCIFPRCIFSAIDAVYCARFVELVHQQKTPNFSTLLCYDRVFSDIIYTVASCTENEASRYGRFLCCMLETVTRWHSDRATYEKECGNYPGFLTILRATGFDGGNKADQLDYENFRHVVHKWHYKLTKASVHCLETGEYTHIRNILIVLTKILPWYPKVLNLGQALERRVHKICQEEKEKRPDLYALAMGYFGQLKSRKSYMIPENEFHHKDPPPRNAAASVQNGPGGGPSSSAIGSASKSDESSTEETDKSRERSQCGVKAVNKASSATLKGNSSNGNSSSNSSKTVKENDKEKGKEKEKEKKEKTPATTPEARILGKDGKEKPKEERPNKDEKARETKERTPKSDKEKEKFKKEEKVKDEKFKTTVPNVESKSTQEKEREKEPSRERDIAKEMKSKENVKGGEKTPVSGSLKSPVPRSDIAEPEREQKRRKIDTHPSPSHSSTVKDSLIELKESSAKLYLNHTPPSLSKSKEREMDKKDLDKSRERSREREKKDEKDRKERKRDHSNNDREVPPDLTKRRKEENGTMGVSKHKSESPCESPYPNEKDKEKNKSKSSGKEKGGDSFKSEKMDKISSGGKKLFSLNLSSTHKSSDKHR.

2 coiled-coil regions span residues 293–339 (NCIM…KVEK) and 896–965 (HTSY…NWLL). The short motif at 923 to 928 (KKKKEK) is the Nuclear localization signal element. The tract at residues 1184 to 1576 (NEFHHKDPPP…STHKSSDKHR (393 aa)) is disordered. Basic and acidic residues predominate over residues 1218-1234 (KSDESSTEETDKSRERS). At Ser-1222 the chain carries Phosphoserine. A compositionally biased stretch (low complexity) spans 1251 to 1263 (GNSSNGNSSSNSS). Basic and acidic residues-rich tracts occupy residues 1265-1285 (TVKE…KEKT), 1294-1343 (ILGK…EKFK), and 1353-1383 (STQE…KGGE). Phosphothreonine is present on Thr-1385. A phosphoserine mark is found at Ser-1390, Ser-1393, and Ser-1417. Residues 1416–1425 (PSPSHSSTVK) show a composition bias toward polar residues. Thr-1443 bears the Phosphothreonine mark. A compositionally biased stretch (basic and acidic residues) spans 1449–1504 (KSKEREMDKKDLDKSRERSREREKKDEKDRKERKRDHSNNDREVPPDLTKRRKEEN). Phosphoserine occurs at positions 1450, 1486, and 1516. Positions 1464-1491 (RERSREREKKDEKDRKERKRDHSNNDRE) form a coiled coil. The segment covering 1524–1552 (NEKDKEKNKSKSSGKEKGGDSFKSEKMDK) has biased composition (basic and acidic residues).

This sequence belongs to the THOC2 family. Component of the THO subcomplex, which is composed of THOC1, THOC2, THOC3, THOC5, THOC6 and THOC7. The THO subcomplex interacts with DDX39B to form the THO-DDX39B complex which multimerizes into a 28-subunit tetrameric assembly. Component of the transcription/export (TREX) complex at least composed of ALYREF/THOC4, DDX39B, SARNP/CIP29, CHTOP and the THO subcomplex; in the complex interacts with THOC1, THOC3, THOC5, THOC7 and DDX39B. TREX seems to have a dynamic structure involving ATP-dependent remodeling. Interacts with POLDIP3 and ZC3H11A.

Its subcellular location is the nucleus. It localises to the nucleus speckle. The protein localises to the cytoplasm. Its function is as follows. Component of the THO subcomplex of the TREX complex which is thought to couple mRNA transcription, processing and nuclear export, and which specifically associates with spliced mRNA and not with unspliced pre-mRNA. Required for efficient export of polyadenylated RNA and spliced mRNA. The THOC1-THOC2-THOC3 core complex alone is sufficient to bind export factor NXF1-NXT1 and promote ATPase activity of DDX39B; in the complex THOC2 is the only component that directly interacts with DDX39B. TREX is recruited to spliced mRNAs by a transcription-independent mechanism, binds to mRNA upstream of the exon-junction complex (EJC) and is recruited in a splicing- and cap-dependent manner to a region near the 5' end of the mRNA where it functions in mRNA export to the cytoplasm via the TAP/NXF1 pathway. Required for NXF1 localization to the nuclear rim. THOC2 (and probably the THO complex) is involved in releasing mRNA from nuclear speckle domains. Plays a role for proper neuronal development. This chain is THO complex subunit 2 (THOC2), found in Rhinolophus ferrumequinum (Greater horseshoe bat).